We begin with the raw amino-acid sequence, 667 residues long: Bifunctional polymyxin resistance protein ArnA (667 aa).

The formyltransferase ArnAFT stretch occupies residues 1–304 (MKAIVFAYHD…EMGIVTDVRL (304 aa)). His104 serves as the catalytic Proton donor; for formyltransferase activity. (6R)-10-formyltetrahydrofolate is bound by residues Arg114 and 136 to 140 (VKKAD). Positions 314-667 (RRTRVLILGV…TAAPKDELNA (354 aa)) are dehydrogenase ArnADH. NAD(+)-binding positions include Asp347 and 368–369 (DI). Residues Ala393, Tyr398, and 432 to 433 (TS) contribute to the UDP-alpha-D-glucuronate site. Glu434 serves as the catalytic Proton acceptor; for decarboxylase activity. UDP-alpha-D-glucuronate contacts are provided by residues Arg460, Asn492, 526-535 (KLVDGGAQKR), and Tyr613. The Proton donor; for decarboxylase activity role is filled by Arg619.

This sequence in the N-terminal section; belongs to the Fmt family. UDP-L-Ara4N formyltransferase subfamily. It in the C-terminal section; belongs to the NAD(P)-dependent epimerase/dehydratase family. UDP-glucuronic acid decarboxylase subfamily. As to quaternary structure, homohexamer, formed by a dimer of trimers.

It catalyses the reaction UDP-alpha-D-glucuronate + NAD(+) = UDP-beta-L-threo-pentopyranos-4-ulose + CO2 + NADH. It carries out the reaction UDP-4-amino-4-deoxy-beta-L-arabinose + (6R)-10-formyltetrahydrofolate = UDP-4-deoxy-4-formamido-beta-L-arabinose + (6S)-5,6,7,8-tetrahydrofolate + H(+). It participates in nucleotide-sugar biosynthesis; UDP-4-deoxy-4-formamido-beta-L-arabinose biosynthesis; UDP-4-deoxy-4-formamido-beta-L-arabinose from UDP-alpha-D-glucuronate: step 1/3. It functions in the pathway nucleotide-sugar biosynthesis; UDP-4-deoxy-4-formamido-beta-L-arabinose biosynthesis; UDP-4-deoxy-4-formamido-beta-L-arabinose from UDP-alpha-D-glucuronate: step 3/3. Its pathway is bacterial outer membrane biogenesis; lipopolysaccharide biosynthesis. In terms of biological role, bifunctional enzyme that catalyzes the oxidative decarboxylation of UDP-glucuronic acid (UDP-GlcUA) to UDP-4-keto-arabinose (UDP-Ara4O) and the addition of a formyl group to UDP-4-amino-4-deoxy-L-arabinose (UDP-L-Ara4N) to form UDP-L-4-formamido-arabinose (UDP-L-Ara4FN). The modified arabinose is attached to lipid A and is required for resistance to polymyxin and cationic antimicrobial peptides. This Yersinia pseudotuberculosis serotype O:3 (strain YPIII) protein is Bifunctional polymyxin resistance protein ArnA.